Consider the following 709-residue polypeptide: Disintegrin and metalloproteinase domain-containing protein 5 (709 aa).

Residues 1-98 (MKTPISSILK…TLSGFIHVIY (98 aa)) constitute a propeptide that is removed on maturation. At 1 to 649 (MKTPISSILK…QQNRGIHPKQ (649 aa)) the chain is on the extracellular side. The 194-residue stretch at 141–334 (RYIKTDIVVD…QDLECLQDLP (194 aa)) folds into the Peptidase M12B domain. Cystine bridges form between cysteine 247–cysteine 329, cysteine 289–cysteine 314, cysteine 291–cysteine 296, cysteine 406–cysteine 426, cysteine 585–cysteine 597, cysteine 591–cysteine 603, and cysteine 605–cysteine 614. One can recognise a Disintegrin domain in the interval 346–434 (RRICGNGILE…YCVPDTFARN (89 aa)). The 35-residue stretch at 581–615 (DFQQCNTSRDCNDHGVCNNFNHCHCDKGYNPPYCE) folds into the EGF-like; calcium-binding domain. A helical membrane pass occupies residues 650–670 (QLQLILYITLPLIMIISAVFI). The Cytoplasmic portion of the chain corresponds to 671–709 (KQSKLSRLCGRERSEGTSCITEDSVSNTKMTTNEGSTLH). The tract at residues 690–709 (ITEDSVSNTKMTTNEGSTLH) is disordered.

In terms of assembly, interacts with TEX101. As to expression, detected in testis.

The protein resides in the membrane. Functionally, this is a non catalytic metalloprotease-like protein. May play a role in sperm-egg fusion. The protein is Disintegrin and metalloproteinase domain-containing protein 5 (Adam5) of Rattus norvegicus (Rat).